We begin with the raw amino-acid sequence, 306 residues long: C-type lectin domain family 10 member A (306 aa).

Topologically, residues M1 to H37 are cytoplasmic. A helical; Signal-anchor for type II membrane protein transmembrane segment spans residues L38–S58. At Q59–S306 the chain is on the extracellular side. N-linked (GlcNAc...) asparagine glycans are attached at residues N76 and N168. A C-type lectin domain is found at C174–M300. Cystine bridges form between C175/C186, C203/C298, and C276/C290.

In terms of assembly, homooligomer.

Its subcellular location is the membrane. In terms of biological role, recognizes terminal galactose and N-acetylgalactosamine units. This is C-type lectin domain family 10 member A (Clec10a) from Rattus norvegicus (Rat).